The following is a 175-amino-acid chain: Ribosome maturation factor RimM (175 aa).

Residues 94 to 166 form the PRC barrel domain; it reads SDSWYEHELI…FIRLVPPGGL (73 aa).

Belongs to the RimM family. In terms of assembly, binds ribosomal protein uS19.

It localises to the cytoplasm. Functionally, an accessory protein needed during the final step in the assembly of 30S ribosomal subunit, possibly for assembly of the head region. Essential for efficient processing of 16S rRNA. May be needed both before and after RbfA during the maturation of 16S rRNA. It has affinity for free ribosomal 30S subunits but not for 70S ribosomes. The chain is Ribosome maturation factor RimM from Renibacterium salmoninarum (strain ATCC 33209 / DSM 20767 / JCM 11484 / NBRC 15589 / NCIMB 2235).